The following is an 86-amino-acid chain: MTHIGSLLLDAATLMVTGMAVVFLFLTLLVYLVQFMSRVIPQEVPEAAATPKKSQKVQPVTDSVSPQVVAAIAAAVHQHRSATAKQ.

Residues 11 to 33 (AATLMVTGMAVVFLFLTLLVYLV) traverse the membrane as a helical segment.

Belongs to the OadG family. In terms of assembly, heterotrimer of an alpha, a beta and a gamma subunit. The cofactor is Na(+).

It is found in the cell membrane. The enzyme catalyses oxaloacetate + 2 Na(+)(in) + H(+) = pyruvate + 2 Na(+)(out) + CO2. Catalyzes the decarboxylation of oxaloacetate coupled to Na(+) translocation. This Vibrio cholerae serotype O1 (strain ATCC 39315 / El Tor Inaba N16961) protein is Probable oxaloacetate decarboxylase gamma chain 1 (oadG1).